A 592-amino-acid chain; its full sequence is V-type ATP synthase alpha chain 1 (592 aa).

An ATP-binding site is contributed by 233-240 (GPFGSGKT).

Belongs to the ATPase alpha/beta chains family.

The catalysed reaction is ATP + H2O + 4 H(+)(in) = ADP + phosphate + 5 H(+)(out). Functionally, produces ATP from ADP in the presence of a proton gradient across the membrane. The V-type alpha chain is a catalytic subunit. This is V-type ATP synthase alpha chain 1 from Clostridium tetani (strain Massachusetts / E88).